The following is a 402-amino-acid chain: Plasminogen activator inhibitor 1 (402 aa).

The N-terminal stretch at 1 to 23 (MRMSLVFACLAMGLALTFAEGSA) is a signal peptide. N232, N288, and N352 each carry an N-linked (GlcNAc...) asparagine glycan.

The protein belongs to the serpin family. In terms of assembly, forms a heterodimer with TMPRSS7. Interacts with VTN. Binds LRP1B; binding is followed by internalization and degradation. Interacts with PPP1CB. In complex with PLAU/uPA, interacts with PLAUR/uPAR. Interacts with SORL1 and LRP1, either alone or in complex with PLAU; these interactions are abolished in the presence of LRPAP1/RAP. The ternary complex composed of PLAUR-PLAU-PAI1 also interacts with SORL1. Interacts with PLAT/tPA. Also interacts with SORL1, when complexed to PLAT/tPA.

The protein resides in the secreted. Its function is as follows. Serine protease inhibitor. Inhibits TMPRSS7. Is a primary inhibitor of tissue-type plasminogen activator (PLAT) and urokinase-type plasminogen activator (PLAU). As PLAT inhibitor, it is required for fibrinolysis down-regulation and is responsible for the controlled degradation of blood clots. As PLAU inhibitor, it is involved in the regulation of cell adhesion and spreading. Acts as a regulator of cell migration, independently of its role as protease inhibitor. It is required for stimulation of keratinocyte migration during cutaneous injury repair. It is involved in cellular and replicative senescence. Plays a role in alveolar type 2 cells senescence in the lung. Is involved in the regulation of cementogenic differentiation of periodontal ligament stem cells, and regulates odontoblast differentiation and dentin formation during odontogenesis. In Sus scrofa (Pig), this protein is Plasminogen activator inhibitor 1 (SERPINE1).